The sequence spans 214 residues: Triosephosphate isomerase (214 aa).

6–8 (NLK) serves as a coordination point for substrate. H85 acts as the Electrophile in catalysis. Catalysis depends on E133, which acts as the Proton acceptor. Residues I138, G173, and 194–195 (AS) contribute to the substrate site.

It belongs to the triosephosphate isomerase family. In terms of assembly, homotetramer; dimer of dimers.

Its subcellular location is the cytoplasm. It catalyses the reaction D-glyceraldehyde 3-phosphate = dihydroxyacetone phosphate. The protein operates within carbohydrate biosynthesis; gluconeogenesis. It participates in carbohydrate degradation; glycolysis; D-glyceraldehyde 3-phosphate from glycerone phosphate: step 1/1. Involved in the gluconeogenesis. Catalyzes stereospecifically the conversion of dihydroxyacetone phosphate (DHAP) to D-glyceraldehyde-3-phosphate (G3P). This is Triosephosphate isomerase from Halobacterium salinarum (strain ATCC 700922 / JCM 11081 / NRC-1) (Halobacterium halobium).